A 281-amino-acid chain; its full sequence is Bifunctional protein FolD (281 aa).

NADP(+) contacts are provided by residues 165-167 (GRG), Thr-192, and Val-233.

This sequence belongs to the tetrahydrofolate dehydrogenase/cyclohydrolase family. In terms of assembly, homodimer.

It carries out the reaction (6R)-5,10-methylene-5,6,7,8-tetrahydrofolate + NADP(+) = (6R)-5,10-methenyltetrahydrofolate + NADPH. It catalyses the reaction (6R)-5,10-methenyltetrahydrofolate + H2O = (6R)-10-formyltetrahydrofolate + H(+). The protein operates within one-carbon metabolism; tetrahydrofolate interconversion. In terms of biological role, catalyzes the oxidation of 5,10-methylenetetrahydrofolate to 5,10-methenyltetrahydrofolate and then the hydrolysis of 5,10-methenyltetrahydrofolate to 10-formyltetrahydrofolate. In Mycobacterium tuberculosis (strain ATCC 25177 / H37Ra), this protein is Bifunctional protein FolD.